The chain runs to 898 residues: Filament-like plant protein 7 (898 aa).

Coiled-coil stretches lie at residues 23–224 (EVVA…TAEA) and 287–320 (EKINNLTEQLCLLEEENKTLREALNKKVSELQFS). 3 disordered regions span residues 429–482 (DNRP…DIKS), 693–723 (PGNQNLSRKTVEEEANDKTASASENELKLEE), and 777–835 (KSNN…GGNS). Over residues 434 to 459 (SSPICSSDSISATGPVENESNENSSE) the composition is skewed to low complexity. Polar residues predominate over residues 460–469 (ATKTSGTVYS). Residues 703–764 (VEEEANDKTA…KALTNSKETA (62 aa)) are a coiled coil. Residues 808-822 (MKAEDHNTGESKDQK) show a composition bias toward basic and acidic residues.

Belongs to the FPP family. Interacts with WPP/MAF proteins.

This chain is Filament-like plant protein 7 (FPP7), found in Arabidopsis thaliana (Mouse-ear cress).